We begin with the raw amino-acid sequence, 443 residues long: Structure-specific endonuclease subunit SLX1 (443 aa).

Positions 13–93 (RVYVCYCLRS…QKPHASRHLR (81 aa)) constitute a GIY-YIG domain. The segment at 121–140 (FPATRSSAPSSAASHDSGLN) is disordered. An SLX1-type zinc finger spans residues 361–419 (CGLCGGHINRHVPLSYTHCPHACDAVFHLTCLARYSLEQETRAHARTFCLPTSAWCPMC).

It belongs to the SLX1 family. In terms of assembly, forms a heterodimer with SLX4. The cofactor is a divalent metal cation.

The protein localises to the nucleus. Catalytic subunit of the SLX1-SLX4 structure-specific endonuclease that resolves DNA secondary structures generated during DNA repair and recombination. Has endonuclease activity towards branched DNA substrates, introducing single-strand cuts in duplex DNA close to junctions with ss-DNA. The polypeptide is Structure-specific endonuclease subunit SLX1 (Malassezia globosa (strain ATCC MYA-4612 / CBS 7966) (Dandruff-associated fungus)).